A 245-amino-acid polypeptide reads, in one-letter code: RAD51-like protein 1 (245 aa).

Interacts with brc-2 and rad-51.

The protein resides in the nucleus. Has a role in the homologous recombination repair (HRR) of genomic DNA during meiosis. Required for rad-51 recruitment onto ssDNA gaps generated at stalled replication fork barriers. The protein is RAD51-like protein 1 (rfs-1) of Caenorhabditis elegans.